Reading from the N-terminus, the 287-residue chain is U1 small nuclear ribonucleoprotein A (287 aa).

Positions 16-95 (HTIYINNLNE…KPMRIQYAKT (80 aa)) constitute an RRM 1 domain. N6-acetyllysine is present on K66. The tract at residues 106–134 (TYVERDRKREKRKPKSQETPAAKKAVQGG) is disordered. Low complexity predominate over residues 125 to 134 (PAAKKAVQGG). R157 bears the Omega-N-methylarginine mark. Residues 213–287 (HILFLTNLPE…NAMKISFAKK (75 aa)) form the RRM 2 domain.

This sequence belongs to the RRM U1 A/B'' family. U1 snRNP is composed of the 7 core Sm proteins SNRPB, SNRPD1, SNRPD2, SNRPD3, SNRPE, SNRPF and SNRPG that assemble in a heptameric protein ring on the Sm site of the small nuclear RNA to form the core snRNP, and at least three U1 snRNP-specific proteins SNRNP70/U1-70K, SNRPA/U1-A and SNRPC/U1-C. Interacts with SFPQ; component of a snRNP-free complex with SFPQ. Interacts with IVNS1ABP (via BACK domain); the interaction is indirect.

The protein resides in the nucleus. Its function is as follows. Component of the spliceosomal U1 snRNP, which is essential for recognition of the pre-mRNA 5' splice-site and the subsequent assembly of the spliceosome. U1 snRNP is the first snRNP to interact with pre-mRNA. This interaction is required for the subsequent binding of U2 snRNP and the U4/U6/U5 tri-snRNP. SNRPA binds stem loop II of U1 snRNA. In a snRNP-free form (SF-A) may be involved in coupled pre-mRNA splicing and polyadenylation process. May bind preferentially to the 5'-UGCAC-3' motif on RNAs. This chain is U1 small nuclear ribonucleoprotein A (Snrpa), found in Mus musculus (Mouse).